A 262-amino-acid polypeptide reads, in one-letter code: Cytochrome c oxidase subunit 3 (262 aa).

The next 7 membrane-spanning stretches (helical) occupy residues 16 to 36, 42 to 59, 83 to 103, 128 to 148, 163 to 183, 198 to 218, and 240 to 260; these read PWPLTGAIGAMTTVTGLVQWF, TLFLLGNIITMLTMYQWW, GMILFIISEVFFFISFFWAFF, FQIPLLNTAILLASGVTVTWA, SLFFTVLLGIYFSILQAYEYI, FFVATGFHGLHVLIGTSFLLI, and AWYWHFVDVVWLFLYISIYWW.

The protein belongs to the cytochrome c oxidase subunit 3 family. Component of the cytochrome c oxidase (complex IV, CIV), a multisubunit enzyme composed of a catalytic core of 3 subunits and several supernumerary subunits. The complex exists as a monomer or a dimer and forms supercomplexes (SCs) in the inner mitochondrial membrane with ubiquinol-cytochrome c oxidoreductase (cytochrome b-c1 complex, complex III, CIII).

The protein resides in the mitochondrion inner membrane. The catalysed reaction is 4 Fe(II)-[cytochrome c] + O2 + 8 H(+)(in) = 4 Fe(III)-[cytochrome c] + 2 H2O + 4 H(+)(out). Component of the cytochrome c oxidase, the last enzyme in the mitochondrial electron transport chain which drives oxidative phosphorylation. The respiratory chain contains 3 multisubunit complexes succinate dehydrogenase (complex II, CII), ubiquinol-cytochrome c oxidoreductase (cytochrome b-c1 complex, complex III, CIII) and cytochrome c oxidase (complex IV, CIV), that cooperate to transfer electrons derived from NADH and succinate to molecular oxygen, creating an electrochemical gradient over the inner membrane that drives transmembrane transport and the ATP synthase. Cytochrome c oxidase is the component of the respiratory chain that catalyzes the reduction of oxygen to water. Electrons originating from reduced cytochrome c in the intermembrane space (IMS) are transferred via the dinuclear copper A center (CU(A)) of subunit 2 and heme A of subunit 1 to the active site in subunit 1, a binuclear center (BNC) formed by heme A3 and copper B (CU(B)). The BNC reduces molecular oxygen to 2 water molecules using 4 electrons from cytochrome c in the IMS and 4 protons from the mitochondrial matrix. The chain is Cytochrome c oxidase subunit 3 from Aedes aegypti (Yellowfever mosquito).